A 201-amino-acid chain; its full sequence is ATP-dependent Clp protease proteolytic subunit (201 aa).

Ser-98 acts as the Nucleophile in catalysis. His-123 is an active-site residue.

It belongs to the peptidase S14 family. In terms of assembly, fourteen ClpP subunits assemble into 2 heptameric rings which stack back to back to give a disk-like structure with a central cavity, resembling the structure of eukaryotic proteasomes.

It localises to the cytoplasm. The enzyme catalyses Hydrolysis of proteins to small peptides in the presence of ATP and magnesium. alpha-casein is the usual test substrate. In the absence of ATP, only oligopeptides shorter than five residues are hydrolyzed (such as succinyl-Leu-Tyr-|-NHMec, and Leu-Tyr-Leu-|-Tyr-Trp, in which cleavage of the -Tyr-|-Leu- and -Tyr-|-Trp bonds also occurs).. Its function is as follows. Cleaves peptides in various proteins in a process that requires ATP hydrolysis. Has a chymotrypsin-like activity. Plays a major role in the degradation of misfolded proteins. The polypeptide is ATP-dependent Clp protease proteolytic subunit (Rickettsia typhi (strain ATCC VR-144 / Wilmington)).